The following is a 319-amino-acid chain: Annexin D4 (319 aa).

Annexin repeat units follow at residues 1–75 (MALP…EFSR) and 86–157 (HPWE…GLVS). The Ca(2+) site is built by Gly19, Gly21, and Glu72. The residue at position 115 (Thr115) is a Phosphothreonine. A phosphotyrosine mark is found at Tyr159 and Tyr211. 2 Annexin repeats span residues 169–240 (DSAK…ICLL) and 241–316 (KPAL…TLLS). Ser277 bears the Phosphoserine mark. The residue at position 287 (Tyr287) is a Phosphotyrosine.

The protein belongs to the annexin (TC 1.A.31.1) family. Expressed mainly in roots and flowers. Lower in stems and leaves.

May be involved in osmotic stress and abscisic acid signaling in a calcium-dependent manner. This chain is Annexin D4 (ANN4), found in Arabidopsis thaliana (Mouse-ear cress).